A 144-amino-acid chain; its full sequence is MSGDEAVAAPVVPPVAEAAVIPEDMDVSTALELTVRKSRAYGGVVRGLHESAKLIEKRNAQLCVLAEDCNQPDYVKLVKALCADHSIKLLTVPSAKTLGEWAGLCKIDSEGNARKVVGCSCLVIKDFGEETTALNIVKKHLDSN.

The residue at position 2 (Ser-2) is an N-acetylserine.

Belongs to the eukaryotic ribosomal protein eS12 family.

The chain is Small ribosomal subunit protein eS12y (RPS12C) from Arabidopsis thaliana (Mouse-ear cress).